The following is an 812-amino-acid chain: Collagen-like protein 5 (812 aa).

N-linked (GlcNAc...) asparagine; by host glycosylation is found at Asn-13 and Asn-83. Collagen-like domains lie at 69–128 (GASG…KGDD), 143–502 (GEKG…KGDN), and 506–565 (GETG…KGEA). The disordered stretch occupies residues 71–568 (SGAQGVKGDP…PGIKGEAGTN (498 aa)). Basic and acidic residues-rich tracts occupy residues 88–112 (TKGEKGDKGDKGSKGDNGEKGEKGD), 121–435 (SKGD…ETGS), 444–523 (SKGD…KGIK), and 531–561 (VKGDKGSKGDKGDLGDTGIKGDKGEKGDPGI). N-linked (GlcNAc...) asparagine; by host glycosylation is present at Asn-502. 3 N-linked (GlcNAc...) asparagine; by host glycosylation sites follow: Asn-637, Asn-658, and Asn-667. A disordered region spans residues 730-802 (GQARTNGAST…VSASGGRGGD (73 aa)). Residues 752-765 (FGGGGGGASGFAKG) show a composition bias toward gly residues.

Post-translationally, may be hydroxylated on lysine by the viral-encoded procollagen-lysine,2-oxoglutarate 5-dioxygenase.

It is found in the virion. Functionally, may participate in the formation of a layer of cross-linked glycosylated fibrils at the viral surface thus giving it a hairy-like appearance. This chain is Collagen-like protein 5, found in Acanthamoeba polyphaga (Amoeba).